The chain runs to 752 residues: Complement C2 (752 aa).

An N-terminal signal peptide occupies residues Met-1–Ser-20. 3 consecutive Sushi domains span residues Pro-22–Pro-86, Val-87–Asn-146, and Gly-149–Gln-206. 6 disulfide bridges follow: Cys-24–Cys-64, Cys-51–Cys-84, Cys-89–Cys-131, Cys-117–Cys-144, Cys-151–Cys-191, and Cys-177–Cys-204. N-linked (GlcNAc...) asparagine glycosylation occurs at Asn-29. Asn-112 carries N-linked (GlcNAc...) asparagine glycosylation. The VWFA domain occupies Asn-254–Met-452. The MIDAS-like motif motif lies at Asp-260–Ser-264. Ser-262 and Ser-264 together coordinate Mg(2+). N-linked (GlcNAc...) asparagine glycans are attached at residues Asn-290 and Asn-333. Position 337 (Thr-337) interacts with Mg(2+). 3 cysteine pairs are disulfide-bonded: Cys-463-Cys-581, Cys-492-Cys-508, and Cys-584-Cys-600. In terms of domain architecture, Peptidase S1 spans Gly-464–Gly-744. N-linked (GlcNAc...) asparagine glycosylation is found at Asn-467 and Asn-471. Catalysis depends on charge relay system residues His-507 and Asp-561. Residue Asn-621 is glycosylated (N-linked (GlcNAc...) asparagine). Disulfide bonds link Cys-638-Cys-665 and Cys-675-Cys-705. Ser-679 acts as the Charge relay system in catalysis.

The protein belongs to the peptidase S1 family. As to quaternary structure, serine protease component of the C3 convertase, also named C4bC2b, composed of the serine protease complement C2b and complement C4b. Serine protease component of the C5 convertase, also named C4bC2bC3b, composed of the serine protease complement C2b, complement C3b, as well as complement C4b. It depends on Mg(2+) as a cofactor. Requires Mn(2+) as cofactor. In terms of processing, cleaved and activated by different proteases depending on the complement pathway to generate complement C2a and serine protease complement C2b chains. Cleaved and activated by C1S following activation by the classical complement system. Cleaved and activated by MASP2 following activation by the lectin complement system. Cleaved and activated by GZMK following activation by the GZMK complement system.

It localises to the secreted. Its subcellular location is the cell surface. It carries out the reaction Selective cleavage of Arg-|-Ser bond in complement component C3 alpha-chain to form C3a and C3b, and Arg-|-Xaa bond in complement component C5 alpha-chain to form C5a and C5b.. Precursor of the catalytic component of the C3 and C5 convertase complexes, which are part of the complement pathway, a cascade of proteins that leads to phagocytosis and breakdown of pathogens and signaling that strengthens the adaptive immune system. Component C2 is part of the classical, lectin and GZMK complement systems. In terms of biological role, catalytic component of the complement C3 and C5 convertase complexes. Following complement activation, recruited to the surface of pathogens by complement C4b opsonin to form the C3 convertase, or C3b and C4b opsonins to form the C5 convertase. As part of the C3 convertase, cleaves and activate C3 into C3a anaphylatoxin and C3b opsonin, the next components of the complement pathways. As part of the C5 convertase, cleaves and activate C5 into C5a anaphylatoxin and C5b component of the membrane attack complex. The chain is Complement C2 from Pongo pygmaeus (Bornean orangutan).